The following is a 149-amino-acid chain: Protein OPG200 (149 aa).

This sequence belongs to the orthopoxvirus OPG200 family. In terms of assembly, homodimers. Interacts with host IKBKB; this interaction inhibits host NF-kappa-B activation.

Its function is as follows. Contributes to virulence by binding to the host IKBKB subunit of the IKK complex and preventing host NF-kappa-B activation in response to pro-inflammatory stimuli such as TNF-alpha or IL1B. Mechanistically, sterically hinders the direct contact between the kinase domains of IKBKB in the IKK complex containing IKBKB, CHUK/IKKA and NEMO. The chain is Protein OPG200 (OPG200) from Vaccinia virus (strain Western Reserve) (VACV).